The chain runs to 283 residues: 4-diphosphocytidyl-2-C-methyl-D-erythritol kinase (283 aa).

The active site involves lysine 10. Position 99-109 (99-109 (PMGGGLGGGSS)) interacts with ATP. The active site involves aspartate 141.

Belongs to the GHMP kinase family. IspE subfamily. In terms of assembly, homodimer.

The catalysed reaction is 4-CDP-2-C-methyl-D-erythritol + ATP = 4-CDP-2-C-methyl-D-erythritol 2-phosphate + ADP + H(+). The protein operates within isoprenoid biosynthesis; isopentenyl diphosphate biosynthesis via DXP pathway; isopentenyl diphosphate from 1-deoxy-D-xylulose 5-phosphate: step 3/6. In terms of biological role, catalyzes the phosphorylation of the position 2 hydroxy group of 4-diphosphocytidyl-2C-methyl-D-erythritol. This Escherichia coli O157:H7 (strain EC4115 / EHEC) protein is 4-diphosphocytidyl-2-C-methyl-D-erythritol kinase.